Reading from the N-terminus, the 239-residue chain is DNA repair protein RecO (239 aa).

The protein belongs to the RecO family.

In terms of biological role, involved in DNA repair and RecF pathway recombination. This Stenotrophomonas maltophilia (strain K279a) protein is DNA repair protein RecO.